Consider the following 448-residue polypeptide: uncharacterized protein (448 aa).

Residues Ser187–Gly198 are compositionally biased toward basic and acidic residues. Disordered regions lie at residues Ser187–Arg221, Leu243–Met270, and Leu291–Gly361. Positions Leu243 to Ser261 are enriched in low complexity. A compositionally biased stretch (basic and acidic residues) spans Phe307–Arg334.

The protein to M.tuberculosis Rv0025 and Rv0739.

This is an uncharacterized protein from Mycobacterium tuberculosis (strain CDC 1551 / Oshkosh).